Reading from the N-terminus, the 229-residue chain is Adenosylcobinamide-GDP ribazoletransferase (229 aa).

The next 6 membrane-spanning stretches (helical) occupy residues 31–51 (AMLL…AVLA), 55–75 (AVEL…AASS), 111–131 (AGVL…ATLL), 134–154 (PLLA…VCCT), 176–196 (VAVL…LVLV), and 208–228 (GDVM…AWAA).

The protein belongs to the CobS family. It depends on Mg(2+) as a cofactor.

The protein resides in the cell membrane. It catalyses the reaction alpha-ribazole + adenosylcob(III)inamide-GDP = adenosylcob(III)alamin + GMP + H(+). It carries out the reaction alpha-ribazole 5'-phosphate + adenosylcob(III)inamide-GDP = adenosylcob(III)alamin 5'-phosphate + GMP + H(+). It functions in the pathway cofactor biosynthesis; adenosylcobalamin biosynthesis; adenosylcobalamin from cob(II)yrinate a,c-diamide: step 7/7. Functionally, joins adenosylcobinamide-GDP and alpha-ribazole to generate adenosylcobalamin (Ado-cobalamin). Also synthesizes adenosylcobalamin 5'-phosphate from adenosylcobinamide-GDP and alpha-ribazole 5'-phosphate. The chain is Adenosylcobinamide-GDP ribazoletransferase from Nocardioides sp. (strain ATCC BAA-499 / JS614).